Here is a 429-residue protein sequence, read N- to C-terminus: Adenylosuccinate synthetase (429 aa).

GTP-binding positions include 12–18 and 40–42; these read GDEGKGK and GHT. Catalysis depends on Asp13, which acts as the Proton acceptor. 2 residues coordinate Mg(2+): Asp13 and Gly40. IMP contacts are provided by residues 13–16, 38–41, Thr128, Arg142, Gln223, Thr238, and Arg302; these read DEGK and NAGH. The Proton donor role is filled by His41. 298 to 304 is a binding site for substrate; sequence TVTGRPR. GTP is bound by residues Arg304, 330-332, and 412-414; these read LLD and SVG.

It belongs to the adenylosuccinate synthetase family. In terms of assembly, homodimer. The cofactor is Mg(2+).

It localises to the cytoplasm. The enzyme catalyses IMP + L-aspartate + GTP = N(6)-(1,2-dicarboxyethyl)-AMP + GDP + phosphate + 2 H(+). It functions in the pathway purine metabolism; AMP biosynthesis via de novo pathway; AMP from IMP: step 1/2. Plays an important role in the de novo pathway of purine nucleotide biosynthesis. Catalyzes the first committed step in the biosynthesis of AMP from IMP. This Lactobacillus acidophilus (strain ATCC 700396 / NCK56 / N2 / NCFM) protein is Adenylosuccinate synthetase.